The chain runs to 272 residues: Auxin-responsive protein IAA5 (272 aa).

Residues 1 to 92 form a disordered region; sequence MSPPLEPHDY…DSSPRHGASS (92 aa). 2 stretches are compositionally biased toward low complexity: residues 14 to 33 and 40 to 50; these read SAAA…SPNP and PRLTLRLGLPG. The EAR-like (transcriptional repression) signature appears at 44-48; that stretch reads LRLGL. Residues 152 to 256 form the PB1 domain; that stretch reads PLYVKVSMDG…RKLKIMRGSD (105 aa).

Belongs to the Aux/IAA family. Homodimers and heterodimers. Highly expressed in roots and flowers. Expressed in shoots.

The protein resides in the nucleus. Its function is as follows. Aux/IAA proteins are short-lived transcriptional factors that function as repressors of early auxin response genes at low auxin concentrations. The sequence is that of Auxin-responsive protein IAA5 (IAA5) from Oryza sativa subsp. indica (Rice).